The sequence spans 284 residues: Acetylglutamate kinase (284 aa).

Substrate-binding positions include 66-67 (GG), Arg88, and Asn179.

This sequence belongs to the acetylglutamate kinase family. ArgB subfamily.

The protein resides in the cytoplasm. It carries out the reaction N-acetyl-L-glutamate + ATP = N-acetyl-L-glutamyl 5-phosphate + ADP. The protein operates within amino-acid biosynthesis; L-arginine biosynthesis; N(2)-acetyl-L-ornithine from L-glutamate: step 2/4. Its function is as follows. Catalyzes the ATP-dependent phosphorylation of N-acetyl-L-glutamate. The sequence is that of Acetylglutamate kinase from Actinobacillus pleuropneumoniae serotype 3 (strain JL03).